Consider the following 252-residue polypeptide: Hydroxyacylglutathione hydrolase (252 aa).

Zn(2+)-binding residues include His54, His56, Asp58, His59, His111, Asp128, and His166.

It belongs to the metallo-beta-lactamase superfamily. Glyoxalase II family. As to quaternary structure, monomer. Requires Zn(2+) as cofactor.

The catalysed reaction is an S-(2-hydroxyacyl)glutathione + H2O = a 2-hydroxy carboxylate + glutathione + H(+). It participates in secondary metabolite metabolism; methylglyoxal degradation; (R)-lactate from methylglyoxal: step 2/2. Its function is as follows. Thiolesterase that catalyzes the hydrolysis of S-D-lactoyl-glutathione to form glutathione and D-lactic acid. In Vibrio cholerae serotype O1 (strain ATCC 39541 / Classical Ogawa 395 / O395), this protein is Hydroxyacylglutathione hydrolase.